A 354-amino-acid chain; its full sequence is DNA replication and repair protein RecF (354 aa).

30 to 37 is an ATP binding site; that stretch reads GDNGSGKT.

Belongs to the RecF family.

The protein resides in the cytoplasm. In terms of biological role, the RecF protein is involved in DNA metabolism; it is required for DNA replication and normal SOS inducibility. RecF binds preferentially to single-stranded, linear DNA. It also seems to bind ATP. The sequence is that of DNA replication and repair protein RecF from Idiomarina loihiensis (strain ATCC BAA-735 / DSM 15497 / L2-TR).